The primary structure comprises 20 residues: Putative 18 kDa spermidine-binding protein (20 aa).

As to quaternary structure, dimer of 18 kDa and 60 kDa subunit.

The protein resides in the microsome membrane. Its subcellular location is the endoplasmic reticulum membrane. Its function is as follows. May have spermidine-binding activity. The sequence is that of Putative 18 kDa spermidine-binding protein from Zea mays (Maize).